Reading from the N-terminus, the 146-residue chain is Hemoglobin subunit beta-1 (146 aa).

The Globin domain maps to 2 to 146 (HWTAEEKALI…VAHALARRYH (145 aa)). H92 serves as a coordination point for heme b.

The protein belongs to the globin family. In terms of assembly, heterotetramer of two alpha chains and two beta chains. Red blood cells.

Its function is as follows. Involved in oxygen transport from the lung to the various peripheral tissues. This Saara hardwickii (Indian spiny-tailed lizard) protein is Hemoglobin subunit beta-1.